The sequence spans 383 residues: Meiotic recombination protein SPO11-2 (383 aa).

The region spanning L24–L167 is the Topo IIA-type catalytic domain. Y124 serves as the catalytic O-(5'-phospho-DNA)-tyrosine intermediate. Positions 217 and 270 each coordinate Mg(2+).

It belongs to the TOP6A family. Heterotetramer of 2 SPO11 (SPO11-1 and/or SPO11-2) and 2 MTOPVIB chains. Interacts with MTOPVIB. May form a heterodimer with SPO11-1. Interacts with PRD1. Does not interact with TOP6B. Mg(2+) is required as a cofactor. As to expression, very low expression in flowers and shoots.

Its subcellular location is the nucleus. It catalyses the reaction ATP-dependent breakage, passage and rejoining of double-stranded DNA.. In terms of biological role, component of a topoisomerase 6 complex specifically required for meiotic recombination. Together with MTOPVIB, mediates DNA cleavage that forms the double-strand breaks (DSB) that initiate meiotic recombination. The complex promotes relaxation of negative and positive supercoiled DNA and DNA decatenation through cleavage and ligation cycles. The polypeptide is Meiotic recombination protein SPO11-2 (SPO11-2) (Arabidopsis thaliana (Mouse-ear cress)).